We begin with the raw amino-acid sequence, 480 residues long: Ribosomal protein uS12 methylthiotransferase RimO (480 aa).

One can recognise an MTTase N-terminal domain in the interval Asn37 to Pro147. 6 residues coordinate [4Fe-4S] cluster: Cys46, Cys82, Cys111, Cys179, Cys183, and Cys186. The 238-residue stretch at Leu165–Glu402 folds into the Radical SAM core domain. Residues Ala405–Asp471 form the TRAM domain.

Belongs to the methylthiotransferase family. RimO subfamily. The cofactor is [4Fe-4S] cluster.

It localises to the cytoplasm. It carries out the reaction L-aspartate(89)-[ribosomal protein uS12]-hydrogen + (sulfur carrier)-SH + AH2 + 2 S-adenosyl-L-methionine = 3-methylsulfanyl-L-aspartate(89)-[ribosomal protein uS12]-hydrogen + (sulfur carrier)-H + 5'-deoxyadenosine + L-methionine + A + S-adenosyl-L-homocysteine + 2 H(+). Catalyzes the methylthiolation of an aspartic acid residue of ribosomal protein uS12. This is Ribosomal protein uS12 methylthiotransferase RimO from Shewanella sp. (strain ANA-3).